The primary structure comprises 558 residues: MLLNLPYEILLIIFSLIESKKFFKLLSINKEVREFILTMLNQNPKSFSFNLKNCNPKDSIKYLQSVRCLNLSKSTINDDQLKYLSDVYSLNISNCKSITDRGLSFLTQVVKLNVSYNGNITDNGLKNFQRIKKINLCFCGKITDKGIENLVYGKTLNSDEPIPTVINTIRKINLQCCMRITSKCLQHLRRARSINMLYGPQTYNEDLQYIPNIETLKIDGLDVSDKNLTNLKYVKYIFFGRNYPVIFMSHLDKLTKLILPNVPEHIEYIDFNKMPNLVKADLSGCINLLDEQLKGLSKVRKLNLKECYDITDVGLSYLTMVKKINISYCFRITDSGLKYLSNADYVNICGCLKITNEGFFYLKKVPKLVVGYTTLSLYDCMIDGCGDYEYLTISDNTKQLITGKAFHYLENTSQIKIINCNNIIDVDLKSFTNLPTLSKIDLRYCNNITNQGLSALCNIPIVKISNNYQISSKGISYLTNSKKISIESCPKINSFPNLTGLKKLVFKTMGKINMQLIQNLNEYYHIDTIHVYYRDFIDRQHLSSIKINDNIHFISDKF.

In terms of domain architecture, F-box spans methionine 1 to phenylalanine 47. 10 LRR repeats span residues lysine 73–phenylalanine 105, cysteine 139–cysteine 176, cysteine 177–glycine 220, leucine 251–glycine 284, cysteine 285–tyrosine 317, cysteine 329–tyrosine 361, valine 369–aspartate 395, cysteine 420–tyrosine 444, cysteine 445–tyrosine 477, and serine 481–threonine 508.

In Acanthamoeba polyphaga mimivirus (APMV), this protein is Putative F-box/LRR-repeat protein R542.